The primary structure comprises 911 residues: Protein translocase subunit SecA (911 aa).

ATP-binding positions include Gln-87, 105 to 109 (GEGKT), and Asp-513. The disordered stretch occupies residues 853 to 911 (IQLQHEQVSGLEPEAGEAPSAGEPRSEQPYVRAGRKVGRNDPCPCGSGKKFKACHGKLG). Over residues 862–875 (GLEPEAGEAPSAGE) the composition is skewed to low complexity. Zn(2+)-binding residues include Cys-895, Cys-897, Cys-906, and His-907. The span at 901–911 (KKFKACHGKLG) shows a compositional bias: basic residues.

The protein belongs to the SecA family. Monomer and homodimer. Part of the essential Sec protein translocation apparatus which comprises SecA, SecYEG and auxiliary proteins SecDF-YajC and YidC. It depends on Zn(2+) as a cofactor.

Its subcellular location is the cell inner membrane. The protein localises to the cytoplasm. It carries out the reaction ATP + H2O + cellular proteinSide 1 = ADP + phosphate + cellular proteinSide 2.. Part of the Sec protein translocase complex. Interacts with the SecYEG preprotein conducting channel. Has a central role in coupling the hydrolysis of ATP to the transfer of proteins into and across the cell membrane, serving both as a receptor for the preprotein-SecB complex and as an ATP-driven molecular motor driving the stepwise translocation of polypeptide chains across the membrane. This Teredinibacter turnerae (strain ATCC 39867 / T7901) protein is Protein translocase subunit SecA.